Reading from the N-terminus, the 489-residue chain is Cytochrome P450 monooxygenase prhB (489 aa).

Transmembrane regions (helical) follow at residues 1-21, 212-232, and 287-307; these read MFSFGFLITAVVFWVVTKVIY, VIFQCLGFFPWIKEPLVMIFA, and LFIGAGAESTATLLMGVAYLL. 2 N-linked (GlcNAc...) asparagine glycosylation sites follow: Asn-347 and Asn-379. Cys-431 provides a ligand contact to heme.

The protein belongs to the cytochrome P450 family. It depends on heme as a cofactor.

It is found in the membrane. The protein operates within secondary metabolite biosynthesis; terpenoid biosynthesis. Its function is as follows. Cytochrome P450 monooxygenase; part of the gene cluster that mediates the biosynthesis of paraherquonin, a meroterpenoid with a unique, highly congested hexacyclic molecular architecture. The first step of the pathway is the synthesis of 3,5-dimethylorsellinic acid (DMOA) by the polyketide synthase prhL. Synthesis of DMOA is followed by farnesylation by the prenyltransferase prhE, methylesterification by the methyl-transferase prhM, epoxidation of the prenyl chain by the flavin-dependent monooxygenase prhF, and cyclization of the farnesyl moiety by the terpene cyclase prhH, to yield the tetracyclic intermediate, protoaustinoid A. The short chain dehydrogenase prhI then oxidizes the C-3 alcohol group of the terpene cyclase product to transform protoaustinoid A into protoaustinoid B. The FAD-binding monooxygenase prhJ catalyzes the oxidation of protoaustinoid B into preaustinoid A which is further oxidized into preaustinoid A1 by FAD-binding monooxygenase phrK. Finally, prhA leads to berkeleydione via the berkeleyone B intermediate. PrhA is a multifunctional dioxygenase that first desaturates at C5-C6 to form berkeleyone B, followed by rearrangement of the A/B-ring to form the cycloheptadiene moiety in berkeleydione. Berkeleydione serves as the key intermediate for the biosynthesis of paraherquonin as well as many other meroterpenoids. The cytochrome P450 monooxygenases prhB, prhD, and prhN, as well as the isomerase prhC, are probably involved in the late stage of paraherquonin biosynthesis, after the production of berkeleydione. Especially prhC might be a multifunctional enzyme that catalyzes the D-ring expansion via intramolecular methoxy rearrangement, as well as the hydrolysis of the expanded D-ring. This is Cytochrome P450 monooxygenase prhB from Penicillium brasilianum.